Here is a 692-residue protein sequence, read N- to C-terminus: Elongation factor G (692 aa).

In terms of domain architecture, tr-type G spans 8-282 (ENTRNIGIMA…AVIDYLPSPL (275 aa)). GTP contacts are provided by residues 17–24 (AHIDAGKT), 81–85 (DTPGH), and 135–138 (NKMD).

This sequence belongs to the TRAFAC class translation factor GTPase superfamily. Classic translation factor GTPase family. EF-G/EF-2 subfamily.

It is found in the cytoplasm. In terms of biological role, catalyzes the GTP-dependent ribosomal translocation step during translation elongation. During this step, the ribosome changes from the pre-translocational (PRE) to the post-translocational (POST) state as the newly formed A-site-bound peptidyl-tRNA and P-site-bound deacylated tRNA move to the P and E sites, respectively. Catalyzes the coordinated movement of the two tRNA molecules, the mRNA and conformational changes in the ribosome. The protein is Elongation factor G of Bacillus cytotoxicus (strain DSM 22905 / CIP 110041 / 391-98 / NVH 391-98).